Consider the following 310-residue polypeptide: Protoheme IX farnesyltransferase (310 aa).

9 helical membrane passes run 21-43, 48-70, 95-115, 118-138, 147-167, 174-194, 220-240, 243-263, and 289-309; these read LLKP…VAPV, MIAL…LNMW, GEAL…LGLA, LFAA…YSMW, IVIG…VATG, LFMF…LALF, VLVY…TGIG, LYLA…VRIW, and LFLH…GLGG.

It belongs to the UbiA prenyltransferase family. Protoheme IX farnesyltransferase subfamily. Interacts with CtaA.

The protein resides in the cell inner membrane. It catalyses the reaction heme b + (2E,6E)-farnesyl diphosphate + H2O = Fe(II)-heme o + diphosphate. Its pathway is porphyrin-containing compound metabolism; heme O biosynthesis; heme O from protoheme: step 1/1. In terms of biological role, converts heme B (protoheme IX) to heme O by substitution of the vinyl group on carbon 2 of heme B porphyrin ring with a hydroxyethyl farnesyl side group. This Cereibacter sphaeroides (strain KD131 / KCTC 12085) (Rhodobacter sphaeroides) protein is Protoheme IX farnesyltransferase.